Reading from the N-terminus, the 113-residue chain is UPF0321 protein C569.02c (113 aa).

Positions 1 to 17 (MLLLFCICCAFIKLVLA) are cleaved as a signal peptide. N-linked (GlcNAc...) asparagine glycans are attached at residues N20, N39, and N65.

It belongs to the UPF0321 family.

The sequence is that of UPF0321 protein C569.02c from Schizosaccharomyces pombe (strain 972 / ATCC 24843) (Fission yeast).